A 1057-amino-acid polypeptide reads, in one-letter code: Carbamoyl phosphate synthase large chain (1057 aa).

The tract at residues 1 to 401 (MPKRNDIKTI…SLLKAIRSLE (401 aa)) is carboxyphosphate synthetic domain. The ATP site is built by Arg-129, Arg-169, Gly-175, Gly-176, Lys-208, Ile-210, Glu-215, Gly-241, Ile-242, His-243, Gln-284, and Glu-298. The 195-residue stretch at 133–327 (RTLMNYLNVP…IAKLAAKIAV (195 aa)) folds into the ATP-grasp 1 domain. Residues Gln-284, Glu-298, and Asn-300 each contribute to the Mg(2+) site. 3 residues coordinate Mn(2+): Gln-284, Glu-298, and Asn-300. An oligomerization domain region spans residues 402–546 (YGVHHLGLPN…YGTYETENES (145 aa)). Residues 547–929 (IITDKEKILV…ALFKGLTGSG (383 aa)) form a carbamoyl phosphate synthetic domain region. One can recognise an ATP-grasp 2 domain in the interval 671–861 (EALLRKINVP…MAQLAMRAII (191 aa)). Arg-707, Arg-746, Leu-748, Glu-752, Gly-777, Val-778, His-779, Ser-780, Gln-820, and Glu-832 together coordinate ATP. The Mg(2+) site is built by Gln-820, Glu-832, and Asn-834. Residues Gln-820, Glu-832, and Asn-834 each contribute to the Mn(2+) site. The region spanning 930–1057 (VEVKDHGTVL…ESMTFTMRQM (128 aa)) is the MGS-like domain. The segment at 930-1057 (VEVKDHGTVL…ESMTFTMRQM (128 aa)) is allosteric domain.

It belongs to the CarB family. In terms of assembly, composed of two chains; the small (or glutamine) chain promotes the hydrolysis of glutamine to ammonia, which is used by the large (or ammonia) chain to synthesize carbamoyl phosphate. Tetramer of heterodimers (alpha,beta)4. The cofactor is Mg(2+). It depends on Mn(2+) as a cofactor.

The enzyme catalyses hydrogencarbonate + L-glutamine + 2 ATP + H2O = carbamoyl phosphate + L-glutamate + 2 ADP + phosphate + 2 H(+). It catalyses the reaction hydrogencarbonate + NH4(+) + 2 ATP = carbamoyl phosphate + 2 ADP + phosphate + 2 H(+). Its pathway is amino-acid biosynthesis; L-arginine biosynthesis; carbamoyl phosphate from bicarbonate: step 1/1. It functions in the pathway pyrimidine metabolism; UMP biosynthesis via de novo pathway; (S)-dihydroorotate from bicarbonate: step 1/3. Functionally, large subunit of the glutamine-dependent carbamoyl phosphate synthetase (CPSase). CPSase catalyzes the formation of carbamoyl phosphate from the ammonia moiety of glutamine, carbonate, and phosphate donated by ATP, constituting the first step of 2 biosynthetic pathways, one leading to arginine and/or urea and the other to pyrimidine nucleotides. The large subunit (synthetase) binds the substrates ammonia (free or transferred from glutamine from the small subunit), hydrogencarbonate and ATP and carries out an ATP-coupled ligase reaction, activating hydrogencarbonate by forming carboxy phosphate which reacts with ammonia to form carbamoyl phosphate. This chain is Carbamoyl phosphate synthase large chain, found in Staphylococcus aureus (strain bovine RF122 / ET3-1).